The following is a 146-amino-acid chain: NADH-quinone oxidoreductase subunit A (146 aa).

Helical transmembrane passes span 8–28 (FGSVFVFLLLGVIFVVGGYLT), 63–83 (FYVVALIFIIFDVEVVFLYPW), and 93–113 (FALIEVLVFAGILILGLAYAW).

The protein belongs to the complex I subunit 3 family. As to quaternary structure, NDH-1 is composed of 14 different subunits. Subunits NuoA, H, J, K, L, M, N constitute the membrane sector of the complex.

Its subcellular location is the cell inner membrane. The enzyme catalyses a quinone + NADH + 5 H(+)(in) = a quinol + NAD(+) + 4 H(+)(out). Its function is as follows. NDH-1 shuttles electrons from NADH, via FMN and iron-sulfur (Fe-S) centers, to quinones in the respiratory chain. The immediate electron acceptor for the enzyme in this species is believed to be a menaquinone. Couples the redox reaction to proton translocation (for every two electrons transferred, four hydrogen ions are translocated across the cytoplasmic membrane), and thus conserves the redox energy in a proton gradient. This is NADH-quinone oxidoreductase subunit A from Chlorobium chlorochromatii (strain CaD3).